Reading from the N-terminus, the 185-residue chain is Large ribosomal subunit protein uL16m (185 aa).

It belongs to the universal ribosomal protein uL16 family.

It localises to the mitochondrion. This chain is Large ribosomal subunit protein uL16m (RPL16), found in Zea mays (Maize).